Consider the following 145-residue polypeptide: Large ribosomal subunit protein uL11m (145 aa).

This sequence belongs to the universal ribosomal protein uL11 family.

The protein localises to the mitochondrion. In Reclinomonas americana, this protein is Large ribosomal subunit protein uL11m (RPL11).